A 544-amino-acid chain; its full sequence is Chaperonin GroEL (544 aa).

Residues 29–32, K50, 86–90, G414, 477–479, and D493 contribute to the ATP site; these read TLGP, DGTTT, and DAA.

Belongs to the chaperonin (HSP60) family. In terms of assembly, forms a cylinder of 14 subunits composed of two heptameric rings stacked back-to-back. Interacts with the co-chaperonin GroES.

It localises to the cytoplasm. The enzyme catalyses ATP + H2O + a folded polypeptide = ADP + phosphate + an unfolded polypeptide.. In terms of biological role, together with its co-chaperonin GroES, plays an essential role in assisting protein folding. The GroEL-GroES system forms a nano-cage that allows encapsulation of the non-native substrate proteins and provides a physical environment optimized to promote and accelerate protein folding. The chain is Chaperonin GroEL from Hydrogenovibrio crunogenus (strain DSM 25203 / XCL-2) (Thiomicrospira crunogena).